Here is a 443-residue protein sequence, read N- to C-terminus: Transcriptional regulatory protein ZraR (443 aa).

Residues D7 to L121 enclose the Response regulatory domain. Residue D56 is modified to 4-aspartylphosphate. One can recognise a Sigma-54 factor interaction domain in the interval M141–V370. ATP contacts are provided by G172, T173, R329, and R359. A DNA-binding region (H-T-H motif) is located at residues K423–S442.

In terms of processing, phosphorylated by ZraS.

The protein localises to the cytoplasm. Its activity is regulated as follows. Activity of the ZraS/ZraR two-component system is repressed by the zinc-bound form of ZraP, which probably interacts with the periplasmic region of ZraS. Part of the Zra signaling pathway, an envelope stress response (ESR) system composed of the periplasmic accessory protein ZraP, the histidine kinase ZraS and the transcriptional regulator ZraR. The ZraPSR system contributes to antibiotic resistance and is important for membrane integrity in the presence of membrane-targeting biocides. ZraR is a member of the two-component regulatory system ZraS/ZraR. When activated by ZraS, acts in conjunction with sigma-54 to regulate the expression of zraP in the presence of high Zn(2+) or Pb(2+) concentrations. Also positively autoregulates the expression of the zraSR operon. The sequence is that of Transcriptional regulatory protein ZraR (zraR) from Klebsiella oxytoca.